The chain runs to 122 residues: Replication termination protein (122 aa).

Homodimer.

Plays a role in DNA replication and termination (fork arrest mechanism). Two dimers of rtp bind to the two inverted repeat regions (IRI and IRII) present in the termination site. The binding of each dimer is centered on an 8 bp direct repeat. This is Replication termination protein (rtp) from Bacillus spizizenii (strain ATCC 23059 / NRRL B-14472 / W23) (Bacillus subtilis subsp. spizizenii).